Here is a 223-residue protein sequence, read N- to C-terminus: ATP synthase subunit a 1 (223 aa).

Transmembrane regions (helical) follow at residues 20–40 (LTIA…AFAS), 78–98 (YLPY…CTII), 108–128 (LSTT…FGIA), 174–194 (MILA…MSVL), and 196–216 (LLTG…YISA).

This sequence belongs to the ATPase A chain family. In terms of assembly, F-type ATPases have 2 components, CF(1) - the catalytic core - and CF(0) - the membrane proton channel. CF(1) has five subunits: alpha(3), beta(3), gamma(1), delta(1), epsilon(1). CF(0) has four main subunits: a, b, b' and c.

Its subcellular location is the cell inner membrane. Its function is as follows. Key component of the proton channel; it plays a direct role in the translocation of protons across the membrane. This chain is ATP synthase subunit a 1, found in Chlorobium luteolum (strain DSM 273 / BCRC 81028 / 2530) (Pelodictyon luteolum).